The chain runs to 405 residues: Glucose-1-phosphate adenylyltransferase (405 aa).

Alpha-D-glucose 1-phosphate is bound by residues Y96, G161, 176 to 177 (EK), and S194.

It belongs to the bacterial/plant glucose-1-phosphate adenylyltransferase family. Homotetramer.

The enzyme catalyses alpha-D-glucose 1-phosphate + ATP + H(+) = ADP-alpha-D-glucose + diphosphate. The protein operates within glycan biosynthesis; glycogen biosynthesis. Functionally, involved in the biosynthesis of ADP-glucose, a building block required for the elongation reactions to produce glycogen. Catalyzes the reaction between ATP and alpha-D-glucose 1-phosphate (G1P) to produce pyrophosphate and ADP-Glc. The sequence is that of Glucose-1-phosphate adenylyltransferase from Aliivibrio fischeri (strain MJ11) (Vibrio fischeri).